The primary structure comprises 297 residues: Probable tyrosine phosphatase protein J2 (297 aa).

Positions 21-286 (DSLSCIIQEY…VFCYHLIHAY (266 aa)) constitute a Tyrosine-protein phosphatase domain. The active-site Phosphocysteine intermediate is Cys227.

The protein belongs to the protein-tyrosine phosphatase family.

The catalysed reaction is O-phospho-L-tyrosyl-[protein] + H2O = L-tyrosyl-[protein] + phosphate. The sequence is that of Probable tyrosine phosphatase protein J2 (J3) from Microplitis demolitor (Parasitoid wasp).